The sequence spans 435 residues: Glutamate-1-semialdehyde 2,1-aminomutase (435 aa).

Lys-266 carries the post-translational modification N6-(pyridoxal phosphate)lysine.

Belongs to the class-III pyridoxal-phosphate-dependent aminotransferase family. HemL subfamily. Homodimer. Pyridoxal 5'-phosphate serves as cofactor.

The protein resides in the cytoplasm. The catalysed reaction is (S)-4-amino-5-oxopentanoate = 5-aminolevulinate. Its pathway is porphyrin-containing compound metabolism; protoporphyrin-IX biosynthesis; 5-aminolevulinate from L-glutamyl-tRNA(Glu): step 2/2. This is Glutamate-1-semialdehyde 2,1-aminomutase from Nitrosomonas europaea (strain ATCC 19718 / CIP 103999 / KCTC 2705 / NBRC 14298).